The following is a 228-amino-acid chain: Lactate utilization protein A (228 aa).

The protein belongs to the LutA/YkgE family.

Its function is as follows. Is involved in L-lactate degradation and allows cells to grow with lactate as the sole carbon source. The protein is Lactate utilization protein A of Lysinibacillus sphaericus (strain C3-41).